A 1021-amino-acid chain; its full sequence is Solute carrier family 12 member 3 (1021 aa).

Topologically, residues 1–137 (MAELPTTETP…KNPEEPVRFG (137 aa)) are cytoplasmic. Residue S43 is modified to Phosphoserine. Residue T46 is modified to Phosphothreonine; by OXSR1 and STK39. S49 is subject to Phosphoserine. A Phosphothreonine modification is found at T50. 2 positions are modified to phosphothreonine; by OXSR1 and STK39: T55 and T60. Phosphoserine is present on S73. S91 carries the phosphoserine; by OXSR1 and STK39 modification. T124 bears the Phosphothreonine mark. S126 is subject to Phosphoserine. A discontinuously helical transmembrane segment spans residues 138-167 (WVKGVMIRCMLNIWGVILYLRLPWITAQAG). L148 contacts Na(+). N149 serves as a coordination point for polythiazide. W151 serves as a coordination point for Na(+). Residues 168–189 (IVLTWIIILLSVTVTSITGLSI) traverse the membrane as a helical segment. At 190 to 220 (SAISTNGKVKSGGTYFLISRSLGPELGGSIG) the chain is on the cytoplasmic side. The chain crosses the membrane as a helical span at residues 221-243 (LIFAFANAVGVAMHTVGFAETVR). Polythiazide-binding residues include N227 and H234. The Extracellular portion of the chain corresponds to 244–255 (DLLQEYGAPIVD). Transmembrane regions (helical) follow at residues 256–280 (PIND…AGME) and 281–303 (WESK…YLVG). Topologically, residues 304–338 (TLIPPSEDKASKGFFSYRADIFVQNLVPDWRGPDG) are extracellular. Residues 339–360 (TFFGMFSIFFPSATGILAGANI) form a discontinuously helical membrane-spanning segment. T352 contacts polythiazide. Positions 353, 354, and 355 each coordinate chloride. N359 contributes to the polythiazide binding site. The Cytoplasmic segment spans residues 361-371 (SGDLKDPAIAI). The chain crosses the membrane as a helical span at residues 372–393 (PKGTLMAIFWTTISYLAISATI). At 394–453 (GSCVVRDASGVLNDTVTPGWGACEGLACSYGWNFTECTQQHSCHYGLINYYQTMSMVSGF) the chain is on the extracellular side. N406 carries an N-linked (GlcNAc...) asparagine glycan. An intrachain disulfide couples C416 to C421. N426 carries N-linked (GlcNAc...) asparagine glycosylation. C430 and C436 are oxidised to a cystine. The helical transmembrane segment at 454–477 (APLITAGIFGATLSSALACLVSAA) threads the bilayer. Positions 464, 467, and 468 each coordinate Na(+). The Cytoplasmic segment spans residues 478 to 507 (KVFQCLCEDQLYPLIGFFGKGYGKNKEPVR). The helical transmembrane segment at 508 to 522 (GYLLAYAIAVAFIII) threads the bilayer. Residues 523–527 (AELNT) are Extracellular-facing. Residues 528–544 (IAPIISNFFLCSYALIN) form a helical membrane-spanning segment. Y540 lines the chloride pocket. Residues 545–567 (FSCFHASITNSPGWRPSFQYYNK) lie on the Cytoplasmic side of the membrane. Helical transmembrane passes span 568–587 (WAAL…LTWW) and 588–599 (AALIAIGVVLFL). Topologically, residues 600–1021 (LLYVIYKKPE…QENVLTFYCQ (422 aa)) are cytoplasmic. Positions 615–630 (SVQAGSYNLALSYSVG) are scissor helix. ATP-binding residues include L648, R655, V677, G741, L780, and N781.

Belongs to the SLC12A transporter family. Homodimer; adopts a domain-swap conformation at the scissor helices connecting the transmembrane domain and C-terminal domain. Interacts with KLHL3. Interacts with IL18R1; this interaction is increased by IL18 treatment. In terms of processing, ubiquitinated; ubiquitination is essential for regulation of endocytosis. The BCR(KLHL3) complex was initially identified as a candidate ubiquitin ligase for SLC12A3. However, it was later shown that it is not the case. Post-translationally, phosphorylated at Thr-46, Thr-55, Thr-60 and Ser-91 by OXSR1/OSR1 and STK39/SPAK downstream of WNK4, promoting its activity. Phosphorylated in response to IL18. Predominantly expressed in the kidney (at protein level). Localizes to the distal convoluted tubules (at protein level). Not detected in normal aorta, but abundantly expressed in fatty streaks and advanced atherosclerotic lesions (at protein level).

Its subcellular location is the cell membrane. It localises to the apical cell membrane. The catalysed reaction is chloride(out) + Na(+)(out) = chloride(in) + Na(+)(in). Its activity is regulated as follows. Phosphorylation by OXSR1/OSR1 and STK39/SPAK in kidney distal convoluted tubules downstream of WNK4 promotes its activity. Also activated by OXSR1/OSR1 and STK39/SPAK downstream of WNK3. Target of thiazide diuretics used in the treatment of high blood pressure. Thiazide drugs, such as polythiazide, specifically inhibit SLC12A3/NCC transporter activity by competing with chloride for binding and by locking SLC12A3/NCC in an outward-facing conformation. Electroneutral sodium and chloride ion cotransporter, which acts as a key mediator of sodium and chloride reabsorption in kidney distal convoluted tubules. Also acts as a receptor for the pro-inflammatory cytokine IL18, thereby contributing to IL18-induced cytokine production, including IFNG, IL6, IL18 and CCL2. May act either independently of IL18R1, or in a complex with IL18R1. This is Solute carrier family 12 member 3 from Homo sapiens (Human).